The primary structure comprises 1083 residues: Solute carrier family 12 member 7 (1083 aa).

Residues 1 to 55 (MPTNFTVVPVEARADGAGDEAAERTEEPESPESVDQTSPTPGDGNPRENSPFINN) are disordered. At 1 to 119 (MPTNFTVVPV…RREVKAPRMG (119 aa)) the chain is on the cytoplasmic side. Positions 12–27 (ARADGAGDEAAERTEE) are enriched in basic and acidic residues. Phosphoserine occurs at positions 30 and 33. Thr37 is modified (phosphothreonine). Ser50 and Ser62 each carry phosphoserine. Residues 120–142 (TFIGVYLPCLQNILGVILFLRLT) traverse the membrane as a discontinuously helical segment. K(+) is bound by residues Asn131 and Ile132. Val135 lines the chloride pocket. Topologically, residues 143–149 (WIVGAAG) are extracellular. The chain crosses the membrane as a helical span at residues 150–172 (VMESFLIVAMCCTCTMLTAISMS). Over 173-196 (AIATNGVVPAGGSYYMISRSLGPE) the chain is Cytoplasmic. Residues 197–225 (FGGAVGLCFYLGTTFAGAMYILGTIEIFL) traverse the membrane as a helical segment. Topologically, residues 226 to 249 (TYISPSAAIFQAETADGEAAALLN) are extracellular. 2 helical membrane-spanning segments follow: residues 250–271 (NMRV…VGVK) and 272–300 (YVNK…KTAF). At 301 to 419 (APPDIPVCLL…PYVLTDIMTY (119 aa)) the chain is on the extracellular side. Residue Asn312 is glycosylated (N-linked (GlcNAc...) (high mannose) asparagine). 2 N-linked (GlcNAc...) (complex) asparagine glycosylation sites follow: Asn331 and Asn344. Residue Asn360 is glycosylated (N-linked (GlcNAc...) (high mannose) asparagine). Residues 420–440 (FTMLVGIYFPSVTGIMAGSNR) traverse the membrane as a helical segment. K(+) contacts are provided by Pro429 and Thr432. Pro429 is a binding site for chloride. Positions 433 and 434 each coordinate chloride. Residues 441-450 (SGDLKDAQKS) are Cytoplasmic-facing. The helical transmembrane segment at 451 to 473 (IPTGTILAIVTTSFIYLSCIVLF) threads the bilayer. Residues 474-504 (GACIEGVVLRDKFGEALQGNLVIGMLAWPSP) lie on the Extracellular side of the membrane. Residues 505–531 (WVIVIGSFFSTCGAGLQSLTGAPRLLQ) form a helical membrane-spanning segment. Residues 532–554 (AIARDGIIPFLQVFGHGKANGEP) are Cytoplasmic-facing. The next 2 membrane-spanning stretches (helical) occupy residues 555-573 (TWAL…LIAS) and 574-598 (LDSV…ACAV). Chloride is bound at residue Tyr589. The Cytoplasmic portion of the chain corresponds to 599-612 (QTLLRTPNWRPRFK). Helical transmembrane passes span 613-635 (FYHW…ICSW) and 636-651 (YYAL…IYKY). The Cytoplasmic segment spans residues 652 to 1083 (IEYRGAEKEW…GGREVITIYS (432 aa)). Residues 664 to 680 (GIRGLSLNAARYALLRV) form a scissor helix region. 2 positions are modified to phosphothreonine: Thr973 and Thr980.

The protein belongs to the SLC12A transporter family. K/Cl co-transporter subfamily. As to quaternary structure, homodimer; adopts a domain-swap conformation at the scissor helices connecting the transmembrane domain and C-terminal domain. Heterodimer with K-Cl cotransporter SLC12A5. Post-translationally, glycosylation at Asn-331 and Asn-344 is required for proper trafficking to the cell surface, and augments protein stability. In terms of tissue distribution, detected in proximal tubules in the kidney, in particular in basolateral membranes of intercalated cells in the cortical collecting duct.

Its subcellular location is the cell membrane. The enzyme catalyses K(+)(in) + chloride(in) = K(+)(out) + chloride(out). With respect to regulation, activated by N-ethylmaleimide (NEM). Inhibited by furosemide, DIDS and bumetanide. The inhibition is much stronger in the presence of 50 mM K(+) in the uptake medium. Inhibited by DIOA. Inhibited by WNK3. Its function is as follows. Mediates electroneutral potassium-chloride cotransport when activated by cell swelling. May mediate K(+) uptake into Deiters' cells in the cochlea and contribute to K(+) recycling in the inner ear. Important for the survival of cochlear outer and inner hair cells and the maintenance of the organ of Corti. May be required for basolateral Cl(-) extrusion in the kidney and contribute to renal acidification. The chain is Solute carrier family 12 member 7 (Slc12a7) from Mus musculus (Mouse).